A 464-amino-acid chain; its full sequence is Cystathionine beta-lyase, chloroplastic (464 aa).

A chloroplast-targeting transit peptide spans 1–55 (MTSSLSLHSSFVPSFADLSDRGLISKNSPTSVSISKVPTWEKKQISNRNSFKLNC). Pyridoxal 5'-phosphate is bound by residues Tyr127, Arg129, Gly157, Met158, Ser275, and Thr277. Lys278 bears the N6-(pyridoxal phosphate)lysine mark.

Belongs to the trans-sulfuration enzymes family. In terms of assembly, forms homodimers. May form homotetramers from two homodimers. Pyridoxal 5'-phosphate serves as cofactor.

It is found in the plastid. Its subcellular location is the chloroplast. The catalysed reaction is L,L-cystathionine + H2O = L-homocysteine + pyruvate + NH4(+). It catalyses the reaction an S-substituted L-cysteine + H2O = a thiol + pyruvate + NH4(+). It functions in the pathway amino-acid biosynthesis; L-methionine biosynthesis via de novo pathway; L-homocysteine from L-cystathionine: step 1/1. Catalyzes the penultimate step in the de novo biosynthesis of methionine. Its role in methionine metabolism may affect plant development in different organs, probably by modifying plant auxin transport. Its cysteine desulfhydrase activity may be involved in hydrogen sulfur production using L-cysteine as a substrate. This Arabidopsis thaliana (Mouse-ear cress) protein is Cystathionine beta-lyase, chloroplastic.